We begin with the raw amino-acid sequence, 208 residues long: Small ribosomal subunit protein uS4 (208 aa).

Residues 98-164 (SRLDNVVYRM…DRIKFALELA (67 aa)) form the S4 RNA-binding domain.

The protein belongs to the universal ribosomal protein uS4 family. In terms of assembly, part of the 30S ribosomal subunit. Contacts protein S5. The interaction surface between S4 and S5 is involved in control of translational fidelity.

One of the primary rRNA binding proteins, it binds directly to 16S rRNA where it nucleates assembly of the body of the 30S subunit. Its function is as follows. With S5 and S12 plays an important role in translational accuracy. The polypeptide is Small ribosomal subunit protein uS4 (Nitrosococcus oceani (strain ATCC 19707 / BCRC 17464 / JCM 30415 / NCIMB 11848 / C-107)).